Consider the following 427-residue polypeptide: G2/mitotic-specific cyclin-B1 (427 aa).

Residues 33 to 126 (ATSKPGLRPR…DTPSPSPMET (94 aa)) form a disordered region. K73 is modified (N6-acetyllysine). A compositionally biased stretch (basic and acidic residues) spans 100 to 110 (EPEHVKEDKLS). S120 carries the post-translational modification Phosphoserine; by CDK1. Phosphoserine is present on S122. S127 carries the phosphoserine; by PLK1 modification. S141 bears the Phosphoserine mark. Interaction with CDK2 stretches follow at residues 163-171 (EYVKDIYAY) and 252-255 (YEEM). T315 is modified (phosphothreonine).

Belongs to the cyclin family. Cyclin AB subfamily. In terms of assembly, interacts with the CDC2 protein kinase to form a serine/threonine kinase holoenzyme complex also known as maturation promoting factor (MPF). The cyclin subunit imparts substrate specificity to the complex. Binds HEI10. Interacts with catalytically active RALBP1 and CDC2 during mitosis to form an endocytotic complex during interphase. Interacts with CCNF; interaction is required for nuclear localization. Interacts with CDK5RAP3. Interacts with RFPL4A and UBE2A. Interacts with INCA1. Ubiquitinated by the SCF(NIPA) complex during interphase, leading to its destruction. Deubiquitinated by USP22 during G2/M phase. Post-translationally, phosphorylated by PLK1 at Ser-127 on centrosomes during prophase: phosphorylation by PLK1 does not cause nuclear import. Phosphorylation at Ser-141 was also reported to be mediated by PLK1 but Ser-127 seems to be the primary phosphorylation site.

The protein resides in the cytoplasm. Its subcellular location is the nucleus. It localises to the cytoskeleton. The protein localises to the microtubule organizing center. It is found in the centrosome. Functionally, essential for the control of the cell cycle at the G2/M (mitosis) transition. This chain is G2/mitotic-specific cyclin-B1 (CCNB1), found in Bos taurus (Bovine).